The chain runs to 571 residues: MSDKHPGPLVVEGKLADAERLKKESNFLRGTIAEDLKDGLTGGFTGDNFLLIRFHGMYQQDDRDIRAERAEQKLEPRHAMMLRCRLPGGIISPQQWLGIDKFAQESTLYGSIRITNRQTFQFHGILKGNVKPVHQLLGRLGLDALATANDVNRNVLCTSNPVESELHQEAYEWAKKISEHLLPRTRAYAEVWLDQEKVATTDEEPILGATYLPRKFKTTVVIPPQNDVDLHANDMNFVAIAKNGKLVGFNLLVGGGLSIEHGNKKTYARQASEFGYIPLEHTLAVAEAVVTTQRDWGNRTDRKNAKTKYTLERVGVDTFRAEVEKRAGITFEPIRPYEFTGRGDRIGWVKGIDNQWHLTLFIENGRLLDYPGRPLKTGVAEIARIHKGDFRLTANQNLIVAGVPESEKAKIEALARDHGLIDDGVSVQRQNSMACVSFPTCPLAMAEAERFLPEFVTKVEGILHRHGVGDEHIVLRITGCPNGCGRALLAEIGLVGKAVGRYNLHLGGNREGTRIPRMYRENINEEEILREIDQLVGRWATERTAGEGFGDFTIRAGVVRPVVDPAQDFWD.

[4Fe-4S] cluster contacts are provided by Cys-435, Cys-441, Cys-480, and Cys-484. Cys-484 provides a ligand contact to siroheme.

The protein belongs to the nitrite and sulfite reductase 4Fe-4S domain family. As to quaternary structure, alpha(8)-beta(8). The alpha component is a flavoprotein, the beta component is a hemoprotein. Siroheme is required as a cofactor. It depends on [4Fe-4S] cluster as a cofactor.

The catalysed reaction is hydrogen sulfide + 3 NADP(+) + 3 H2O = sulfite + 3 NADPH + 4 H(+). It participates in sulfur metabolism; hydrogen sulfide biosynthesis; hydrogen sulfide from sulfite (NADPH route): step 1/1. In terms of biological role, component of the sulfite reductase complex that catalyzes the 6-electron reduction of sulfite to sulfide. This is one of several activities required for the biosynthesis of L-cysteine from sulfate. This chain is Sulfite reductase [NADPH] hemoprotein beta-component, found in Serratia proteamaculans (strain 568).